A 442-amino-acid polypeptide reads, in one-letter code: MKEQKKVFIKTLGCQMNEYDSARMHEVLNEHFDTVKTDDYKDADIILINTCSIREKAQEKVFHELGRWKGIKKTNEDLIIGVGGCVASQEGENIIKRAPFVDLVFGPQTIHRLPEMIKQKQKSQQSQVDISFPEVEKFDYLPEPKAEGAKAYVSIMEGCDKYCSYCVVPYTRGPEVNRPFEDVLAECAILAEQGVKEITLLGQNVNHYLGPMENGQTADLALLIHFIAEIDGIERIRFTTSHPVEFSQNLIDAYATVPELANHLHLPVQHGSDRILINMKRNHTILEFKQKIRKLRAIRPDITISSDFIVGFPGETEEDFQKLLDLVKEINFDQSFSFIYSKRPGTPAADLPDDTPMEVKKDRLKRLQDLLNSNAQIISRQMVGTNQRILVDGTSKKDDNILSGRTENNRVVNFKGDKSLIGQFAMVKITESLPNSLRGELI.

An MTTase N-terminal domain is found at 5–122; the sequence is KKVFIKTLGC…LPEMIKQKQK (118 aa). [4Fe-4S] cluster is bound by residues C14, C51, C85, C159, C163, and C166. A Radical SAM core domain is found at 145–378; sequence KAEGAKAYVS…DLLNSNAQII (234 aa). Positions 380-442 constitute a TRAM domain; that stretch reads RQMVGTNQRI…LPNSLRGELI (63 aa).

The protein belongs to the methylthiotransferase family. MiaB subfamily. Monomer. It depends on [4Fe-4S] cluster as a cofactor.

The protein localises to the cytoplasm. The enzyme catalyses N(6)-dimethylallyladenosine(37) in tRNA + (sulfur carrier)-SH + AH2 + 2 S-adenosyl-L-methionine = 2-methylsulfanyl-N(6)-dimethylallyladenosine(37) in tRNA + (sulfur carrier)-H + 5'-deoxyadenosine + L-methionine + A + S-adenosyl-L-homocysteine + 2 H(+). Functionally, catalyzes the methylthiolation of N6-(dimethylallyl)adenosine (i(6)A), leading to the formation of 2-methylthio-N6-(dimethylallyl)adenosine (ms(2)i(6)A) at position 37 in tRNAs that read codons beginning with uridine. The polypeptide is tRNA-2-methylthio-N(6)-dimethylallyladenosine synthase (Francisella tularensis subsp. holarctica (strain LVS)).